The primary structure comprises 1325 residues: NHS-like protein 3 (1325 aa).

Residues 53-85 (LEDLHTEAQEGLKILQQEEEDTSSKERNESLEN) are a coiled coil. Disordered regions lie at residues 68–92 (QQEE…SGHS), 111–131 (QGST…KRRS), 291–348 (CSAS…KGKC), 368–570 (MSVS…AKTS), 595–614 (QTNT…TTVK), 829–891 (EVNG…MEES), 935–981 (LLST…VSEF), 1084–1138 (VGED…SSAV), 1243–1272 (GTKK…ENAT), and 1293–1313 (SDQV…EQAS). Over residues 296–334 (ASKGSMASASPSSSRSGSGTNQAPPTTSPSRSNSQSSET) the composition is skewed to low complexity. A compositionally biased stretch (polar residues) spans 335–344 (IVSNSSTISS). Residues 369–378 (SVSSSSSWKS) are compositionally biased toward low complexity. Positions 400–412 (VRNSHSFSRSLSV) are enriched in polar residues. Residues 428–447 (LHHENMQRQREQGDIQDPKD) show a composition bias toward basic and acidic residues. Over residues 450 to 460 (PNNNEQTNRDI) the composition is skewed to polar residues. Positions 515 to 524 (KTRECGENFD) are enriched in basic and acidic residues. Low complexity predominate over residues 528–541 (SPSSGYSSQSGTPT). Residues 834–850 (SPPPSPPPEHHPPPPPI) show a composition bias toward pro residues. 2 stretches are compositionally biased toward polar residues: residues 935–948 (LLST…SSPE) and 1088–1100 (QVNN…TEPT). The span at 1124–1138 (KSNSPAKSSSASSAV) shows a compositional bias: low complexity. Over residues 1302-1311 (RAQSLGNQEQ) the composition is skewed to polar residues.

Functionally, able to directly activate the TNF-NFkappaB signaling pathway. This chain is NHS-like protein 3 (nhsl3), found in Danio rerio (Zebrafish).